Reading from the N-terminus, the 458-residue chain is UDP-N-acetylmuramoylalanine--D-glutamate ligase (458 aa).

Gly-124–Thr-130 lines the ATP pocket.

Belongs to the MurCDEF family.

It localises to the cytoplasm. The catalysed reaction is UDP-N-acetyl-alpha-D-muramoyl-L-alanine + D-glutamate + ATP = UDP-N-acetyl-alpha-D-muramoyl-L-alanyl-D-glutamate + ADP + phosphate + H(+). Its pathway is cell wall biogenesis; peptidoglycan biosynthesis. In terms of biological role, cell wall formation. Catalyzes the addition of glutamate to the nucleotide precursor UDP-N-acetylmuramoyl-L-alanine (UMA). In Clostridium kluyveri (strain NBRC 12016), this protein is UDP-N-acetylmuramoylalanine--D-glutamate ligase.